Consider the following 940-residue polypeptide: UvrABC system protein A (940 aa).

ATP is bound at residue 31 to 38 (GLSGSGKS). Residues 252 to 279 (CPQCGYSMQELEPRLFSFNNPAGACGTC) form a C4-type zinc finger. ABC transporter domains follow at residues 309–586 (WDQK…PNSL) and 606–936 (RDPK…RFLK). An ATP-binding site is contributed by 639-646 (GVSGSGKS). A C4-type zinc finger spans residues 739–765 (CEACQGDGVIKVEMHFLPDVYVPCDVC).

This sequence belongs to the ABC transporter superfamily. UvrA family. As to quaternary structure, forms a heterotetramer with UvrB during the search for lesions.

It localises to the cytoplasm. The UvrABC repair system catalyzes the recognition and processing of DNA lesions. UvrA is an ATPase and a DNA-binding protein. A damage recognition complex composed of 2 UvrA and 2 UvrB subunits scans DNA for abnormalities. When the presence of a lesion has been verified by UvrB, the UvrA molecules dissociate. The chain is UvrABC system protein A from Vibrio parahaemolyticus serotype O3:K6 (strain RIMD 2210633).